The sequence spans 180 residues: Large ribosomal subunit protein uL6 (180 aa).

It belongs to the universal ribosomal protein uL6 family. In terms of assembly, part of the 50S ribosomal subunit.

Its function is as follows. This protein binds to the 23S rRNA, and is important in its secondary structure. It is located near the subunit interface in the base of the L7/L12 stalk, and near the tRNA binding site of the peptidyltransferase center. In Cutibacterium acnes (strain DSM 16379 / KPA171202) (Propionibacterium acnes), this protein is Large ribosomal subunit protein uL6.